The sequence spans 117 residues: Aspartate 1-decarboxylase (117 aa).

S25 functions as the Schiff-base intermediate with substrate; via pyruvic acid in the catalytic mechanism. Residue S25 is modified to Pyruvic acid (Ser). Residue T57 coordinates substrate. Catalysis depends on Y58, which acts as the Proton donor. 72-74 (GAA) is a substrate binding site.

Belongs to the PanD family. In terms of assembly, heterooctamer of four alpha and four beta subunits. The cofactor is pyruvate. Is synthesized initially as an inactive proenzyme, which is activated by self-cleavage at a specific serine bond to produce a beta-subunit with a hydroxyl group at its C-terminus and an alpha-subunit with a pyruvoyl group at its N-terminus.

The protein localises to the cytoplasm. The enzyme catalyses L-aspartate + H(+) = beta-alanine + CO2. It participates in cofactor biosynthesis; (R)-pantothenate biosynthesis; beta-alanine from L-aspartate: step 1/1. Its function is as follows. Catalyzes the pyruvoyl-dependent decarboxylation of aspartate to produce beta-alanine. The sequence is that of Aspartate 1-decarboxylase from Helicobacter pylori (strain J99 / ATCC 700824) (Campylobacter pylori J99).